The chain runs to 568 residues: Cyclin-dependent kinase-like 2 (568 aa).

One can recognise a Protein kinase domain in the interval 4 to 289 (YENLGLVGEG…CADLLRHDFF (286 aa)). ATP-binding positions include 10–18 (VGEGSYGMV) and K33. Positions 45 to 51 (KKIAMRE) match the [NKR]KIAxRE motif. D126 acts as the Proton acceptor in catalysis. Disordered regions lie at residues 309–333 (DARNNSLPKKSQNRKKEKDDALGEE) and 545–568 (SHQGAGSPLSDDSEADLPRMEHQH). Basic and acidic residues predominate over residues 322 to 333 (RKKEKDDALGEE).

This sequence belongs to the protein kinase superfamily. CMGC Ser/Thr protein kinase family. CDC2/CDKX subfamily. As to expression, expressed in testis, kidney, lung and brain.

Its subcellular location is the cytoplasm. The protein resides in the nucleus. It catalyses the reaction L-seryl-[protein] + ATP = O-phospho-L-seryl-[protein] + ADP + H(+). The catalysed reaction is L-threonyl-[protein] + ATP = O-phospho-L-threonyl-[protein] + ADP + H(+). This Mus musculus (Mouse) protein is Cyclin-dependent kinase-like 2.